Here is a 513-residue protein sequence, read N- to C-terminus: L-arabinose transport ATP-binding protein AraG (513 aa).

ABC transporter domains lie at 6–243 (LEMR…GMVG) and 264–508 (VKNW…TKTA). 38 to 45 (GENGAGKS) is a binding site for ATP.

Belongs to the ABC transporter superfamily.

It localises to the cell membrane. The catalysed reaction is L-arabinose(out) + ATP + H2O = L-arabinose(in) + ADP + phosphate + H(+). In terms of biological role, part of the binding-protein-dependent transport system for L-arabinose. Probably responsible for energy coupling to the transport system. In Geobacillus stearothermophilus (Bacillus stearothermophilus), this protein is L-arabinose transport ATP-binding protein AraG (araG).